The following is a 424-amino-acid chain: MDKLVIQGGTRLEGTIAASGSKNSSLPIIAATLLAGTGLFRLHRIPDLKDIATFRSLLHHLGAESHFEDGILEISTSKVKSARAPYELVKKMRASIYVLGPLLARFGHAEVSLPGGCAFGPRPIDLHLMAMEKLGATITIKTGFIEATTNKGRLQGGQIDFPVSSVGATGNALMAAALAEGTTTITNAAAEPEIEALCHFLAAMGSPITGIGTTTLTIEGRPTLQPIEFNNVFDRIEAGTLLAAAAITGGSITLTDTDPEQMQSVLEAFTRSGCTVTTNGHSISLKSPGALQPVNITAEPYPAFPTDMQAQWMALMTQAEGTSLITDRIYHERFNHIPELNRLGAHIDITDNQAVVHGPQRLSGTKVMSTDLRASASLVLAGLVAEGTTEVLRVYHLDRGYERIEEKLRRLGARIERQKYDEFS.

Residue 22-23 coordinates phosphoenolpyruvate; the sequence is KN. Arg-93 is a binding site for UDP-N-acetyl-alpha-D-glucosamine. Catalysis depends on Cys-117, which acts as the Proton donor. Position 117 is a 2-(S-cysteinyl)pyruvic acid O-phosphothioketal (Cys-117). UDP-N-acetyl-alpha-D-glucosamine is bound by residues 122-126, Asp-307, and Ile-329; that span reads RPIDL.

Belongs to the EPSP synthase family. MurA subfamily.

The protein resides in the cytoplasm. It carries out the reaction phosphoenolpyruvate + UDP-N-acetyl-alpha-D-glucosamine = UDP-N-acetyl-3-O-(1-carboxyvinyl)-alpha-D-glucosamine + phosphate. It functions in the pathway cell wall biogenesis; peptidoglycan biosynthesis. In terms of biological role, cell wall formation. Adds enolpyruvyl to UDP-N-acetylglucosamine. This is UDP-N-acetylglucosamine 1-carboxyvinyltransferase from Chlorobium phaeovibrioides (strain DSM 265 / 1930) (Prosthecochloris vibrioformis (strain DSM 265)).